A 514-amino-acid polypeptide reads, in one-letter code: Cobyric acid synthase (514 aa).

In terms of domain architecture, GATase cobBQ-type spans 249 to 448; that stretch reads LIDIAVIKLP…VHGVFDNDEI (200 aa). Cysteine 330 acts as the Nucleophile in catalysis. Histidine 440 is an active-site residue.

It belongs to the CobB/CobQ family. CobQ subfamily.

It functions in the pathway cofactor biosynthesis; adenosylcobalamin biosynthesis. Its function is as follows. Catalyzes amidations at positions B, D, E, and G on adenosylcobyrinic A,C-diamide. NH(2) groups are provided by glutamine, and one molecule of ATP is hydrogenolyzed for each amidation. This is Cobyric acid synthase from Ruminiclostridium cellulolyticum (strain ATCC 35319 / DSM 5812 / JCM 6584 / H10) (Clostridium cellulolyticum).